The sequence spans 207 residues: Ribosomal RNA small subunit methyltransferase G (207 aa).

S-adenosyl-L-methionine contacts are provided by residues G74, F79, V124–E125, and R138.

This sequence belongs to the methyltransferase superfamily. RNA methyltransferase RsmG family.

It is found in the cytoplasm. It catalyses the reaction guanosine(527) in 16S rRNA + S-adenosyl-L-methionine = N(7)-methylguanosine(527) in 16S rRNA + S-adenosyl-L-homocysteine. Its function is as follows. Specifically methylates the N7 position of guanine in position 527 of 16S rRNA. This is Ribosomal RNA small subunit methyltransferase G from Hyphomonas neptunium (strain ATCC 15444).